We begin with the raw amino-acid sequence, 701 residues long: Polyribonucleotide nucleotidyltransferase (701 aa).

2 residues coordinate Mg(2+): Asp485 and Asp491. The region spanning 552-611 (PRITTLKINPEKIRDVIGKGGATIRALTEETGTTIELEDDGTVKIASSNGEATKEAIRRI) is the KH domain. The S1 motif domain occupies 621 to 689 (GTVYNGKVVR…RQGRVRLSMK (69 aa)).

This sequence belongs to the polyribonucleotide nucleotidyltransferase family. As to quaternary structure, component of the RNA degradosome, which is a multiprotein complex involved in RNA processing and mRNA degradation. Requires Mg(2+) as cofactor.

It is found in the cytoplasm. The enzyme catalyses RNA(n+1) + phosphate = RNA(n) + a ribonucleoside 5'-diphosphate. In terms of biological role, involved in mRNA degradation. Catalyzes the phosphorolysis of single-stranded polyribonucleotides processively in the 3'- to 5'-direction. The chain is Polyribonucleotide nucleotidyltransferase from Shewanella piezotolerans (strain WP3 / JCM 13877).